A 252-amino-acid chain; its full sequence is Imidazole glycerol phosphate synthase subunit HisF (252 aa).

Catalysis depends on residues Asp-11 and Asp-130.

Belongs to the HisA/HisF family. As to quaternary structure, heterodimer of HisH and HisF.

The protein localises to the cytoplasm. The enzyme catalyses 5-[(5-phospho-1-deoxy-D-ribulos-1-ylimino)methylamino]-1-(5-phospho-beta-D-ribosyl)imidazole-4-carboxamide + L-glutamine = D-erythro-1-(imidazol-4-yl)glycerol 3-phosphate + 5-amino-1-(5-phospho-beta-D-ribosyl)imidazole-4-carboxamide + L-glutamate + H(+). Its pathway is amino-acid biosynthesis; L-histidine biosynthesis; L-histidine from 5-phospho-alpha-D-ribose 1-diphosphate: step 5/9. Functionally, IGPS catalyzes the conversion of PRFAR and glutamine to IGP, AICAR and glutamate. The HisF subunit catalyzes the cyclization activity that produces IGP and AICAR from PRFAR using the ammonia provided by the HisH subunit. The chain is Imidazole glycerol phosphate synthase subunit HisF from Desulforudis audaxviator (strain MP104C).